The chain runs to 799 residues: LPS-assembly protein LptD (799 aa).

Positions 1 to 34 (MMHELDLRPHLARFAQRPLALLAWALLQGTSVNA) are cleaved as a signal peptide.

Belongs to the LptD family. Component of the lipopolysaccharide transport and assembly complex. Interacts with LptE and LptA.

The protein resides in the cell outer membrane. Functionally, together with LptE, is involved in the assembly of lipopolysaccharide (LPS) at the surface of the outer membrane. This Albidiferax ferrireducens (strain ATCC BAA-621 / DSM 15236 / T118) (Rhodoferax ferrireducens) protein is LPS-assembly protein LptD.